A 101-amino-acid polypeptide reads, in one-letter code: Urease subunit beta (101 aa).

This sequence belongs to the urease beta subunit family. As to quaternary structure, heterotrimer of UreA (gamma), UreB (beta) and UreC (alpha) subunits. Three heterotrimers associate to form the active enzyme.

It is found in the cytoplasm. It carries out the reaction urea + 2 H2O + H(+) = hydrogencarbonate + 2 NH4(+). It participates in nitrogen metabolism; urea degradation; CO(2) and NH(3) from urea (urease route): step 1/1. This is Urease subunit beta from Pseudomonas aeruginosa (strain LESB58).